The primary structure comprises 1268 residues: Neurocan core protein (1268 aa).

The first 22 residues, 1 to 22 (MGAGSVWASGLLLLWLLLLVAG), serve as a signal peptide directing secretion. Residues 37 to 157 (RMLKSGSGPV…EQDLVTLEVT (121 aa)) enclose the Ig-like V-type domain. 5 cysteine pairs are disulfide-bonded: C58–C139, C181–C252, C205–C226, C279–C354, and C303–C324. Residue N121 is glycosylated (N-linked (GlcNAc...) asparagine). Link domains lie at 159–254 (VVFH…YCFA) and 258–356 (GGEV…YCFR). N-linked (GlcNAc...) asparagine glycosylation is present at N339. 4 disordered regions span residues 363 to 391 (QHGDSEIPSSGDEGEIVSAEGPPGRELKP), 406 to 442 (PLMSSGEGEPPDLTWTQAPEETLGSTPGGPTLASWPS), 472 to 540 (PLGT…DQSH), and 574 to 630 (ISPS…LQAS). Residues S380 and S410 are each glycosylated (O-linked (Xyl...) (chondroitin sulfate) serine). The segment covering 419 to 430 (TWTQAPEETLGS) has biased composition (polar residues). A compositionally biased stretch (low complexity) spans 575 to 585 (SPSVPSTESTP). The span at 608–617 (PSEPPAPSPG) shows a compositional bias: pro residues. A compositionally biased stretch (low complexity) spans 618–630 (PSEALSAVSLQAS). A glycan (N-linked (GlcNAc...) asparagine) is linked at N742. The EGF-like 1 domain occupies 960–996 (PTDPCENNPCLHGGTCHTNGTVYGCSCDQGYAGENCE). 11 cysteine pairs are disulfide-bonded: C964-C975, C969-C984, C986-C995, C1002-C1013, C1007-C1022, C1024-C1033, C1040-C1051, C1068-C1160, C1136-C1152, C1167-C1210, and C1196-C1223. An N-linked (GlcNAc...) asparagine glycan is attached at N978. Residues 998-1034 (DIDDCLCSPCENGGTCIDEVNGFICLCLPSYGGSLCE) enclose the EGF-like 2; calcium-binding domain. In terms of domain architecture, C-type lectin spans 1036–1165 (DTEGCDRGWH…LPYVCKKGTV (130 aa)). The 61-residue stretch at 1165-1225 (VLCGPPPAVE…WDRPQIMCIK (61 aa)) folds into the Sushi domain. A glycan (N-linked (GlcNAc...) asparagine) is linked at N1175. Residues 1228-1255 (RSHRMRRHHHHPHRHHKPRKEHRKHKRH) show a composition bias toward basic residues. The tract at residues 1228–1268 (RSHRMRRHHHHPHRHHKPRKEHRKHKRHPAEDWEKDEGDFC) is disordered.

The protein belongs to the aggrecan/versican proteoglycan family. O-glycosylated; contains chondroitin sulfate. As to expression, brain.

The protein resides in the secreted. In terms of biological role, may modulate neuronal adhesion and neurite growth during development by binding to neural cell adhesion molecules (NG-CAM and N-CAM). Chondroitin sulfate proteoglycan; binds to hyaluronic acid. The sequence is that of Neurocan core protein (Ncan) from Mus musculus (Mouse).